Consider the following 145-residue polypeptide: Superoxide dismutase [Mn/Fe] (145 aa).

2 residues coordinate Fe(3+): histidine 10 and histidine 64. Mn(2+) is bound by residues histidine 10 and histidine 64. The disordered stretch occupies residues 126–145 (TSTANQDTPISEGKKPILGL).

Belongs to the iron/manganese superoxide dismutase family. Mn(2+) is required as a cofactor. Requires Fe(3+) as cofactor.

The catalysed reaction is 2 superoxide + 2 H(+) = H2O2 + O2. In terms of biological role, destroys superoxide anion radicals which are normally produced within the cells and which are toxic to biological systems. Catalyzes the dismutation of superoxide anion radicals into O2 and H2O2 by successive reduction and oxidation of the transition metal ion at the active site. The sequence is that of Superoxide dismutase [Mn/Fe] (sodA) from Streptococcus oralis.